The chain runs to 450 residues: MGKLDKASKLIDEENKYYARSARINYYNLVIDHAHGATLVDVDGNKYIDLLASASAINVGHTHEKVVKAIADQAQKLIHYTPAYFHHVPGMELSEKLAKIAPGNSPKMVSFGNSGSDANDAIIKFARAYTGRQYIVSYMGSYHGSTYGSQTLSGSSLNMTRKIGPMLPSVVHVPYPDSYRTYPGETEHDVSLRYFNEFKKPFESFLPADETACVLIEPIQGDGGIIKAPEEYMQLVYKFCHEHGILFAIDEVNQGLGRTGKMWAIQQFKDIEPDLMSVGKSLASGMPLSAVIGKKEVMQSLDAPAHLFTTAGNPVCSAASLATLDVIEYEGLVEKSATDGAYAKQRFLEMQQRHPMIGDVRMWGLNGGIELVKDPKTKEPDSDAATKVIYYAFAHGVVIITLAGNILRFQPPLVIPREQLDQALQVLDDAFTAVENGEVTIPKDTGKIGW.

Residues 115 to 116 (GS), Tyr-142, and 250 to 253 (DEVN) contribute to the pyridoxal 5'-phosphate site. An N6-(pyridoxal phosphate)lysine modification is found at Lys-280. Residue Thr-309 coordinates pyridoxal 5'-phosphate.

This sequence belongs to the class-III pyridoxal-phosphate-dependent aminotransferase family. Homotetramer. It depends on pyridoxal 5'-phosphate as a cofactor.

It catalyses the reaction L-isoleucine = D-allo-isoleucine. Its function is as follows. Catalyzes the epimerization of L-isoleucine to D-allo-isoleucine and D-allo-isoleucine to L-isoleucine. Can also catalyze the racemization of many nonpolar amino acids, including leucine and valine. Does not have GABA aminotransferase activity. The polypeptide is Isoleucine 2-epimerase (Lentilactobacillus buchneri (Lactobacillus buchneri)).